The primary structure comprises 37 residues: Small ribosomal subunit protein eS32 (37 aa).

Belongs to the eukaryotic ribosomal protein eS32 family. As to quaternary structure, part of the small ribosomal subunit.

Functionally, interacts with N(4)-acetylcytidine (ac(4)C) 1459 of the small rRNA; the acetyl group of ac(4)C1459 briges the interaction with this protein. The sequence is that of Small ribosomal subunit protein eS32 (rpl41e) from Thermococcus kodakarensis (strain ATCC BAA-918 / JCM 12380 / KOD1) (Pyrococcus kodakaraensis (strain KOD1)).